A 173-amino-acid chain; its full sequence is Flagellar assembly factor FliW (173 aa).

The interval S152 to E173 is disordered.

This sequence belongs to the FliW family. As to quaternary structure, interacts with translational regulator CsrA and flagellin(s).

The protein resides in the cytoplasm. Its function is as follows. Acts as an anti-CsrA protein, binds CsrA and prevents it from repressing translation of its target genes, one of which is flagellin. Binds to flagellin and participates in the assembly of the flagellum. This Nitratidesulfovibrio vulgaris (strain ATCC 29579 / DSM 644 / CCUG 34227 / NCIMB 8303 / VKM B-1760 / Hildenborough) (Desulfovibrio vulgaris) protein is Flagellar assembly factor FliW.